Reading from the N-terminus, the 104-residue chain is Protein MGF 110-2L (104 aa).

The first 19 residues, Met1–Gly19, serve as a signal peptide directing secretion.

Belongs to the asfivirus MGF 110 family.

In terms of biological role, plays a role in virus cell tropism, and may be required for efficient virus replication in macrophages. The chain is Protein MGF 110-2L from African swine fever virus (isolate Tick/South Africa/Pretoriuskop Pr4/1996) (ASFV).